Here is a 705-residue protein sequence, read N- to C-terminus: Cell cycle serine/threonine-protein kinase CDC5/MSD2 (705 aa).

T23 carries the post-translational modification Phosphothreonine. Basic and acidic residues predominate over residues 41–53; the sequence is QTKRLDPNNDHHH. Residues 41–63 are disordered; sequence QTKRLDPNNDHHHQPAQKKKREK. A Protein kinase domain is found at 82–337; that stretch reads YHRGHFLGEG…LTEIMDYVWF (256 aa). ATP contacts are provided by residues 88–96 and K110; that span reads LGEGGFARC. Catalysis depends on D204, which acts as the Proton acceptor. The residue at position 419 (S419) is a Phosphoserine. Residues 513-595 form the POLO box 1 domain; that stretch reads IVTKWVDYSN…VDFFAKYMKA (83 aa). Zn(2+) contacts are provided by E553, H569, H609, and D612. Residues 614–700 form the POLO box 2 domain; it reads FLRRYTRYKP…IKEGLKQKST (87 aa).

Belongs to the protein kinase superfamily. Ser/Thr protein kinase family. CDC5/Polo subfamily. Interacts with CDC48; the interaction is likely to result in CDC5 degradation. Interacts with CSA1.

It localises to the cytoplasm. Its subcellular location is the cytoskeleton. It is found in the microtubule organizing center. The protein resides in the spindle pole body. The catalysed reaction is L-seryl-[protein] + ATP = O-phospho-L-seryl-[protein] + ADP + H(+). It catalyses the reaction L-threonyl-[protein] + ATP = O-phospho-L-threonyl-[protein] + ADP + H(+). In terms of biological role, protein kinase required for the cell cycle where it is involved in mitotic exit. A component of the fear (CDC14 early anaphase release) network which promotes CDC14 release from the nucleolus during early anaphase. Phosphorylates SCC1/MCD1 and NET1. In Saccharomyces cerevisiae (strain ATCC 204508 / S288c) (Baker's yeast), this protein is Cell cycle serine/threonine-protein kinase CDC5/MSD2 (CDC5).